Here is a 456-residue protein sequence, read N- to C-terminus: MRSSWIKPRLGKDNVTQINFARNGYITEEMDFVAKKENLPASLIMEEVARGRLIIPANINHLNLEPMSIGIASRCKVNANIGASPNASDINEEVEKLKLAVKYGADTVMDLSTGGVNLDEVRKAIIHESPVPIGTVPVYQALESVHGSIDRLTEDDFLHIIEKHCQQGVDYQTIHAGLLIEHLPKVKGRITGIVSRGGGILAQWMLHHFKQNPLYTRFDDICEIFKKYDCTFSLGDSLRPGCLHDASDDAQLAELKTLGELTRRAWEHNVQVMVEGPGHVPMDQIEFNVRKQMEECSEAPFYVLGPLVTDISPGYDHISSAIGAAMAGWYGTSMLCYVTPKEHLGLPNAEDVREGLIAYKIAAHAADIARHRAGARDRDDELSHARYNFDWNKQFELSLDPERAKQYHDETLPEEIFKKAEFCSMCGPKHCPMNSKISDESLDQLKDKLEECNSSV.

Substrate is bound by residues asparagine 80, methionine 109, tyrosine 139, histidine 175, 195–197 (SRG), 236–239 (DSLR), and glutamate 275. Histidine 279 is a Zn(2+) binding site. Tyrosine 302 provides a ligand contact to substrate. Histidine 343 contacts Zn(2+). Residues cysteine 423, cysteine 426, and cysteine 431 each contribute to the [4Fe-4S] cluster site.

It belongs to the ThiC family. Requires [4Fe-4S] cluster as cofactor.

The enzyme catalyses 5-amino-1-(5-phospho-beta-D-ribosyl)imidazole + S-adenosyl-L-methionine = 4-amino-2-methyl-5-(phosphooxymethyl)pyrimidine + CO + 5'-deoxyadenosine + formate + L-methionine + 3 H(+). It functions in the pathway cofactor biosynthesis; thiamine diphosphate biosynthesis. Its function is as follows. Catalyzes the synthesis of the hydroxymethylpyrimidine phosphate (HMP-P) moiety of thiamine from aminoimidazole ribotide (AIR) in a radical S-adenosyl-L-methionine (SAM)-dependent reaction. The chain is Phosphomethylpyrimidine synthase from Prochlorococcus marinus (strain MIT 9312).